The following is a 240-amino-acid chain: UDP-2,3-diacylglucosamine hydrolase (240 aa).

Mn(2+) contacts are provided by aspartate 8, histidine 10, aspartate 41, asparagine 79, and histidine 114. 79–80 (NR) is a binding site for substrate. The substrate site is built by aspartate 122, serine 160, asparagine 164, lysine 167, and histidine 195. Histidine 195 and histidine 197 together coordinate Mn(2+).

Belongs to the LpxH family. The cofactor is Mn(2+).

It localises to the cell inner membrane. It catalyses the reaction UDP-2-N,3-O-bis[(3R)-3-hydroxytetradecanoyl]-alpha-D-glucosamine + H2O = 2-N,3-O-bis[(3R)-3-hydroxytetradecanoyl]-alpha-D-glucosaminyl 1-phosphate + UMP + 2 H(+). It functions in the pathway glycolipid biosynthesis; lipid IV(A) biosynthesis; lipid IV(A) from (3R)-3-hydroxytetradecanoyl-[acyl-carrier-protein] and UDP-N-acetyl-alpha-D-glucosamine: step 4/6. Its function is as follows. Hydrolyzes the pyrophosphate bond of UDP-2,3-diacylglucosamine to yield 2,3-diacylglucosamine 1-phosphate (lipid X) and UMP by catalyzing the attack of water at the alpha-P atom. Involved in the biosynthesis of lipid A, a phosphorylated glycolipid that anchors the lipopolysaccharide to the outer membrane of the cell. The chain is UDP-2,3-diacylglucosamine hydrolase from Escherichia coli O17:K52:H18 (strain UMN026 / ExPEC).